The sequence spans 230 residues: Secretory carrier-associated membrane protein 4 (230 aa).

Residues 1 to 39 (MAGKENNFPPLPPFLPLKPCFYQDFSDEIPVEHQVLVKR) are Cytoplasmic-facing. The next 4 membrane-spanning stretches (helical) occupy residues 40–60 (IYRLWMFYCATLGVNLVACLA), 61–81 (WWIAGGAGANFGLALLWLVLF), 106–126 (MTFFFIFGAQFVLTVIQAIGF), and 149–169 (VVMLVPAILFSLSALVMAVTI). The Cytoplasmic segment spans residues 170 to 230 (VKVHRIYRGA…SYSSSGGHWP (61 aa)). The residue at position 194 (Thr194) is a Phosphothreonine.

The protein belongs to the SCAMP family.

The protein resides in the membrane. Its function is as follows. Probably involved in membrane protein trafficking. In Mus musculus (Mouse), this protein is Secretory carrier-associated membrane protein 4 (Scamp4).